A 556-amino-acid polypeptide reads, in one-letter code: Phosphoglucomutase (556 aa).

Alpha-D-glucose 1,6-bisphosphate-binding residues include Arg22 and Ser114. The Phosphoserine intermediate role is filled by Ser114. The Mg(2+) site is built by Ser114, Asp279, Asp281, and Asp283. Ser114 is modified (phosphoserine). Alpha-D-glucose 1,6-bisphosphate is bound by residues Asp283, Arg284, Thr347, Glu366, Ser368, and Lys379.

The protein belongs to the phosphohexose mutase family. In terms of assembly, monomer. Mg(2+) is required as a cofactor.

It is found in the cytoplasm. The enzyme catalyses alpha-D-glucose 1-phosphate = alpha-D-glucose 6-phosphate. It carries out the reaction O-phospho-L-seryl-[protein] + alpha-D-glucose 1-phosphate = alpha-D-glucose 1,6-bisphosphate + L-seryl-[protein]. It catalyses the reaction alpha-D-glucose 1,6-bisphosphate + L-seryl-[protein] = O-phospho-L-seryl-[protein] + alpha-D-glucose 6-phosphate. In terms of biological role, catalyzes the reversible isomerization of alpha-D-glucose 1-phosphate to alpha-D-glucose 6-phosphate. The mechanism proceeds via the intermediate compound alpha-D-glucose 1,6-bisphosphate. Key enzyme in hexose metabolism. The reverse reaction is an essential step for biosynthesis because glucose 1-phosphate is the starting point for the synthesis of UDP-glucose, which acts as a precursor for the synthesis of oligosaccharides and trehalose. The sequence is that of Phosphoglucomutase (pgmB) from Emericella nidulans (strain FGSC A4 / ATCC 38163 / CBS 112.46 / NRRL 194 / M139) (Aspergillus nidulans).